The chain runs to 111 residues: Large ribosomal subunit protein uL22 (111 aa).

Belongs to the universal ribosomal protein uL22 family. Part of the 50S ribosomal subunit.

Functionally, this protein binds specifically to 23S rRNA; its binding is stimulated by other ribosomal proteins, e.g. L4, L17, and L20. It is important during the early stages of 50S assembly. It makes multiple contacts with different domains of the 23S rRNA in the assembled 50S subunit and ribosome. Its function is as follows. The globular domain of the protein is located near the polypeptide exit tunnel on the outside of the subunit, while an extended beta-hairpin is found that lines the wall of the exit tunnel in the center of the 70S ribosome. This Clostridioides difficile (strain 630) (Peptoclostridium difficile) protein is Large ribosomal subunit protein uL22.